The following is an 861-amino-acid chain: ToMV susceptible protein tm-2 (861 aa).

A coiled-coil region spans residues 63–83; that stretch reads VKNLLKDIQELAGDVEDLLDD. Positions 162–388 constitute an NB-ARC domain; that stretch reads DDFNMLQAKL…LESMGHKVQD (227 aa). An ATP-binding site is contributed by 185 to 192; it reads GMPGLGKT. LRR repeat units follow at residues 225–248, 305–327, 388–411, 449–472, 510–536, 585–608, 609–631, 652–680, 689–713, 735–758, 781–804, and 810–835; these read LDIA…NLRS, LHAL…IFNF, DGCA…CFLY, LAED…TYNG, VARL…KLEK, MTCL…IVKL, TRLE…VWES, ISSF…FFEP, LRKL…PVPK, YPKI…AFPP, LPKL…LSGE, and FPQL…DVSM.

It belongs to the disease resistance NB-LRR family. As to quaternary structure, (Microbial infection) Fails to interact with the tobamovirus mouvement protein of tobacco mosaic virus (TMV).

Its subcellular location is the cell membrane. Potential inhibitor of viral mouvements which may confer resistance to some tobamoviruses but not to the tomato mosaic virus (ToMV) and tobacco mosaic virus (TMV). This Solanum lycopersicum (Tomato) protein is ToMV susceptible protein tm-2.